A 315-amino-acid chain; its full sequence is Porphobilinogen deaminase (315 aa).

An S-(dipyrrolylmethanemethyl)cysteine modification is found at Cys-234.

It belongs to the HMBS family. As to quaternary structure, monomer. The cofactor is dipyrromethane.

The catalysed reaction is 4 porphobilinogen + H2O = hydroxymethylbilane + 4 NH4(+). It functions in the pathway porphyrin-containing compound metabolism; protoporphyrin-IX biosynthesis; coproporphyrinogen-III from 5-aminolevulinate: step 2/4. Its function is as follows. Tetrapolymerization of the monopyrrole PBG into the hydroxymethylbilane pre-uroporphyrinogen in several discrete steps. The sequence is that of Porphobilinogen deaminase from Mycobacterium avium (strain 104).